The primary structure comprises 866 residues: Speckle targeted PIP5K1A-regulated poly(A) polymerase (866 aa).

The Matrin-type zinc-finger motif lies at 16-46 (FRCCLCDVTTANRPSLDAHLKGRKHRDLVQL). The region spanning 56 to 128 (RSVFVSGFPR…HTLRVRPREQ (73 aa)) is the RRM domain. Positions 116-147 (LGGHTLRVRPREQKEFQSPASKSPKGVDSNSH) are disordered. An ATP-binding site is contributed by Ser205. Mg(2+)-binding residues include Asp216 and Asp218. UTP contacts are provided by Asp216 and Asp218. Disordered stretches follow at residues 223–249 (LGDM…STLA) and 267–321 (LSPT…EGKH). Residues 282-304 (TPSSLAPQTPDSALGSDTVTSPQ) are compositionally biased toward polar residues. Asn393 is an ATP binding site. The UTP site is built by Asn393, Arg415, Tyr433, and His550. The PAP-associated domain maps to 492–550 (LSSLLAQFFSCVSCWDLSGSLLSLREGQALMVAGGLPSDLWEGLRLGPMNLQDPFDLSH). The KA1; binds the bulging loops of U6 snRNA but is dispensable for terminal uridylyltransferase activity stretch occupies residues 599-866 (SSPSSLLSAK…IPQALKNLLK (268 aa)). Disordered stretches follow at residues 638 to 687 (QGTK…DHSE), 728 to 755 (EQNP…PSSV), and 773 to 792 (RRRF…STGA). The segment covering 669–687 (KSCEEGKEEPQGCAGDHSE) has biased composition (basic and acidic residues). Phosphoserine is present on residues Ser686 and Ser741.

Belongs to the DNA polymerase type-B-like family. Associates with the cleavage and polyadenylation specificity factor (CPSF) complex. Interacts with CPSF1 and CPSF3; the interaction is direct. Interacts with PIP5K1A. The cofactor is Mg(2+). Requires Mn(2+) as cofactor. In terms of processing, phosphorylated by CK1 in the proline-rich (Pro-rich) region.

The protein resides in the nucleus. The protein localises to the nucleolus. It localises to the nucleus speckle. The enzyme catalyses RNA(n) + UTP = RNA(n)-3'-uridine ribonucleotide + diphosphate. It carries out the reaction RNA(n) + ATP = RNA(n)-3'-adenine ribonucleotide + diphosphate. Its activity is regulated as follows. Adenylyltransferase activity is specifically phosphatidylinositol 4,5-bisphosphate (PtdIns(4,5)P2). Its function is as follows. Poly(A) polymerase that creates the 3'-poly(A) tail of specific pre-mRNAs. Localizes to nuclear speckles together with PIP5K1A and mediates polyadenylation of a select set of mRNAs, such as HMOX1. In addition to polyadenylation, it is also required for the 3'-end cleavage of pre-mRNAs: binds to the 3'UTR of targeted pre-mRNAs and promotes the recruitment and assembly of the CPSF complex on the 3'UTR of pre-mRNAs. In addition to adenylyltransferase activity, also has uridylyltransferase activity. However, the ATP ratio is higher than UTP in cells, suggesting that it functions primarily as a poly(A) polymerase. Acts as a specific terminal uridylyltransferase for U6 snRNA in vitro: responsible for a controlled elongation reaction that results in the restoration of the four 3'-terminal UMP-residues found in newly transcribed U6 snRNA. Not involved in replication-dependent histone mRNA degradation. In Rattus norvegicus (Rat), this protein is Speckle targeted PIP5K1A-regulated poly(A) polymerase (Tut1).